An 885-amino-acid chain; its full sequence is Leucine--tRNA ligase (885 aa).

Positions 48–58 (PYPSGKLHMGH) match the 'HIGH' region motif. The 'KMSKS' region motif lies at 639–643 (TMSKS). K642 lines the ATP pocket.

It belongs to the class-I aminoacyl-tRNA synthetase family.

Its subcellular location is the cytoplasm. The enzyme catalyses tRNA(Leu) + L-leucine + ATP = L-leucyl-tRNA(Leu) + AMP + diphosphate. This chain is Leucine--tRNA ligase, found in Bordetella bronchiseptica (strain ATCC BAA-588 / NCTC 13252 / RB50) (Alcaligenes bronchisepticus).